A 513-amino-acid polypeptide reads, in one-letter code: MADELGTTEREIIAQRLKKAEALRALGVNPFGNGWQPRHLADELLRHYGDQPAEEIAKDPGDWSLAGRVLAVRSFGKAAFLRVRDRSAELQVWVKKDRVGEQAFEVFKLLDIGDIVGAEGPATRTKTGELTLEARTFTILTKATRPLPEKWHGLTDVEQRYRQRYVDLVVTPGVREAFVKRARIVSGIRRFLDARGYLEVETPTLHKPEEAGGAAARPFETHHNALDLDLKLRIATELHLKRLVVGGLDRVYEIGRIWRNEGIDRRHNPEFTSIEFYQAYATHEDLMRLTEELMHRLAVEVTGGPVVTFQGQAIDLTPPFPRVSMLEVGARALGLSPDDALAGRGLAEALSRAAARENDSEDAWKLEQAAKKTPGEAVALAFEIFGEPQLPKDRPAFVVDFPLETSPLSRRRDADPRLVDRFELFAAGMELANAFSELNDPADQRARFEAQMRAKAAGDEEAMPYDEDFVRALEHGMPPTAGEGIGIDRLAMLFTDSASIRDVILFPLLKSRD.

The Mg(2+) site is built by Glu-423 and Glu-430.

The protein belongs to the class-II aminoacyl-tRNA synthetase family. In terms of assembly, homodimer. It depends on Mg(2+) as a cofactor.

It is found in the cytoplasm. The catalysed reaction is tRNA(Lys) + L-lysine + ATP = L-lysyl-tRNA(Lys) + AMP + diphosphate. The chain is Lysine--tRNA ligase from Anaeromyxobacter dehalogenans (strain 2CP-1 / ATCC BAA-258).